The following is a 225-amino-acid chain: Pathogenesis-related 5 protein Jun a 3.0101 (225 aa).

Positions 1–26 (MARVSELAFLLAATLAISLHMQEAGV) are cleaved as a signal peptide. Intrachain disulfides connect Cys-35–Cys-224, Cys-76–Cys-86, Cys-91–Cys-97, Cys-139–Cys-213, Cys-144–Cys-197, Cys-152–Cys-162, Cys-166–Cys-175, and Cys-176–Cys-184. IgE-binding stretches follow at residues 146-157 (ADINAVCPSELK), 158-170 (VDGG…NVFK), and 178-191 (NAYV…NYSK).

This sequence belongs to the thaumatin family. As to expression, expressed in pollen (at protein level).

The polypeptide is Pathogenesis-related 5 protein Jun a 3.0101 (Juniperus ashei (Ozark white cedar)).